A 253-amino-acid polypeptide reads, in one-letter code: 5'/3'-nucleotidase SurE (253 aa).

The a divalent metal cation site is built by Asp8, Asp9, Ser39, and Asn92.

It belongs to the SurE nucleotidase family. A divalent metal cation serves as cofactor.

Its subcellular location is the cytoplasm. The enzyme catalyses a ribonucleoside 5'-phosphate + H2O = a ribonucleoside + phosphate. It carries out the reaction a ribonucleoside 3'-phosphate + H2O = a ribonucleoside + phosphate. The catalysed reaction is [phosphate](n) + H2O = [phosphate](n-1) + phosphate + H(+). In terms of biological role, nucleotidase with a broad substrate specificity as it can dephosphorylate various ribo- and deoxyribonucleoside 5'-monophosphates and ribonucleoside 3'-monophosphates with highest affinity to 3'-AMP. Also hydrolyzes polyphosphate (exopolyphosphatase activity) with the preference for short-chain-length substrates (P20-25). Might be involved in the regulation of dNTP and NTP pools, and in the turnover of 3'-mononucleotides produced by numerous intracellular RNases (T1, T2, and F) during the degradation of various RNAs. This is 5'/3'-nucleotidase SurE from Salmonella paratyphi B (strain ATCC BAA-1250 / SPB7).